A 332-amino-acid polypeptide reads, in one-letter code: MVPREVPESSLTSLKTKDVARRRHKRRSRQHQRFMARKALLQEQESLSMVPGPGLCPLPSPTQTPAGTEASGNRKQRTKARSGSKGLCSKRPVPREAPSSGPSKYVAIDCEMVGTGPQGRVSELARCSVVSYSGDVLYDKYIRPEMPIVDYRTRWSGITRQHMHKAIPFQVAQKEILKLLKGKVVVGHALHNDFQALKYVHPGSQIRDTTYVPNLLSQPSSLTRARVSLKDLALNLLHKKIQVGHHGHSSVEDAMTAMELYQLVEVQWEQQVASTAKAHPEDRGPDSSTDVEQYMDDQYWPEDLAQSTRGDTREAQDRQEGEEGQGARSAPP.

Residues 1–102 form a disordered region; that stretch reads MVPREVPESS…VPREAPSSGP (102 aa). The span at 20-36 shows a compositional bias: basic residues; the sequence is ARRRHKRRSRQHQRFMA. The short motif at 21–29 is the Nucleolar localization signal element; it reads RRRHKRRSR. Positions 63-73 are enriched in polar residues; that stretch reads QTPAGTEASGN. In terms of domain architecture, Exonuclease spans 105–261; the sequence is YVAIDCEMVG…EDAMTAMELY (157 aa). The Nuclear localization signal signature appears at 160–183; sequence RQHMHKAIPFQVAQKEILKLLKGK. A disordered region spans residues 272–332; it reads VASTAKAHPE…EGQGARSAPP (61 aa). Residues 310 to 321 are compositionally biased toward basic and acidic residues; that stretch reads GDTREAQDRQEG.

The protein resides in the nucleus. It localises to the nucleolus. Functionally, exonuclease with activity against single- and double-stranded DNA and RNA. Mediates p53-induced apoptosis. When induced by p53 following DNA damage, digests double-stranded DNA to form single-stranded DNA and amplifies DNA damage signals, leading to enhancement of apoptosis. This Rattus norvegicus (Rat) protein is Apoptosis-enhancing nuclease.